The chain runs to 353 residues: UPF0283 membrane protein KPK_3110 (353 aa).

3 helical membrane passes run 70–90 (MVSA…VQWT), 99–119 (WIAL…VGSV), and 213–233 (ESTL…FIAW).

This sequence belongs to the UPF0283 family.

The protein localises to the cell inner membrane. The protein is UPF0283 membrane protein KPK_3110 of Klebsiella pneumoniae (strain 342).